Consider the following 154-residue polypeptide: Deoxyuridine 5'-triphosphate nucleotidohydrolase (154 aa).

Substrate is bound by residues 72–74 (RSG), N85, 89–91 (LID), and M99.

This sequence belongs to the dUTPase family. The cofactor is Mg(2+).

It carries out the reaction dUTP + H2O = dUMP + diphosphate + H(+). Its pathway is pyrimidine metabolism; dUMP biosynthesis; dUMP from dCTP (dUTP route): step 2/2. In terms of biological role, this enzyme is involved in nucleotide metabolism: it produces dUMP, the immediate precursor of thymidine nucleotides and it decreases the intracellular concentration of dUTP so that uracil cannot be incorporated into DNA. This chain is Deoxyuridine 5'-triphosphate nucleotidohydrolase, found in Psychrobacter sp. (strain PRwf-1).